The following is a 475-amino-acid chain: Chromosomal replication initiator protein DnaA (475 aa).

The segment at 1–73 (MTNSEQERWS…LSCWQAEMPE (73 aa)) is domain I, interacts with DnaA modulators. A domain II region spans residues 73-131 (EVHRIDLSVRTAMRCATPAKEAPVAVEARRAERGDAKPADTRAPVMTPVAASHDALGGS). The domain III, AAA+ region stretch occupies residues 132-354 (PLDPRLTFAS…GAINRLLAHS (223 aa)). ATP contacts are provided by G179, G181, K182, and T183. A domain IV, binds dsDNA region spans residues 355-475 (KLNNQPVTLD…VEALKRQLQD (121 aa)).

This sequence belongs to the DnaA family. Oligomerizes as a right-handed, spiral filament on DNA at oriC.

It localises to the cytoplasm. In terms of biological role, plays an essential role in the initiation and regulation of chromosomal replication. ATP-DnaA binds to the origin of replication (oriC) to initiate formation of the DNA replication initiation complex once per cell cycle. Binds the DnaA box (a 9 base pair repeat at the origin) and separates the double-stranded (ds)DNA. Forms a right-handed helical filament on oriC DNA; dsDNA binds to the exterior of the filament while single-stranded (ss)DNA is stabiized in the filament's interior. The ATP-DnaA-oriC complex binds and stabilizes one strand of the AT-rich DNA unwinding element (DUE), permitting loading of DNA polymerase. After initiation quickly degrades to an ADP-DnaA complex that is not apt for DNA replication. Binds acidic phospholipids. The polypeptide is Chromosomal replication initiator protein DnaA (Bradyrhizobium sp. (strain BTAi1 / ATCC BAA-1182)).